The following is a 377-amino-acid chain: Probable G-protein coupled receptor 27 (377 aa).

At 1-24 (MANASEPGGGGGGAEAAALGLRLA) the chain is on the extracellular side. N-linked (GlcNAc...) asparagine glycosylation occurs at N3. Residues 25–45 (TLSLLLCVSLAGNVLFALLIV) form a helical membrane-spanning segment. Topologically, residues 46–56 (RERSLHRAPYY) are cytoplasmic. The chain crosses the membrane as a helical span at residues 57–77 (LLLDLCLADGLRALACLPAVM). The Extracellular portion of the chain corresponds to 78-98 (LAARRAAAAAGTPPGALGCKL). A disulfide bridge links C96 with C173. The chain crosses the membrane as a helical span at residues 99-119 (LAFLAALFCFHAAFLLLGVGV). Residues 120–140 (TRYLAIAHHRFYAERLAGWPC) are Cytoplasmic-facing. Residues 141–161 (AAMLVCAAWALALAAAFPPVL) traverse the membrane as a helical segment. The Extracellular portion of the chain corresponds to 162 to 183 (DGGGADDEDAPCALEQRPDGAP). The chain crosses the membrane as a helical span at residues 184-204 (GALGFLLLLAAVVGATHLVYL). Topologically, residues 205–287 (RLLFFIHDRR…FKTEKRLCKM (83 aa)) are cytoplasmic. The chain crosses the membrane as a helical span at residues 288-308 (FYAITLLFLLLWGPYVVASYL). Residues 309–322 (RVLVRPGAVPQAYL) are Extracellular-facing. The chain crosses the membrane as a helical span at residues 323 to 343 (TASVWLTFAQAGINPVVCFLF). The Cytoplasmic portion of the chain corresponds to 344 to 377 (NRELRDCFRAQFPCCQSPQATQATLPCDLKGIGL).

It belongs to the G-protein coupled receptor 1 family. As to expression, expressed as a 3.0 kb transcript, in whole brain, hippocampus, striatum, frontal cortex, thalamus, pons and hypothalamus. A lower molecular weight transcript was detected in all regions examined, except the hypothalamus.

It is found in the cell membrane. In terms of biological role, orphan receptor. Possible candidate for amine-like G-protein coupled receptor. The sequence is that of Probable G-protein coupled receptor 27 (Gpr27) from Rattus norvegicus (Rat).